Here is a 432-residue protein sequence, read N- to C-terminus: Tyrosine-protein phosphatase non-receptor type 1 (432 aa).

Methionine 1 bears the N-acetylmethionine mark. Positions 3–277 (MEKEFEQIDK…RFSYLAVIEG (275 aa)) constitute a Tyrosine-protein phosphatase domain. Tyrosine 20 carries the phosphotyrosine modification. Phosphoserine; by PKB/AKT1, CLK1 and CLK2 is present on serine 50. At tyrosine 66 the chain carries Phosphotyrosine; by EGFR. Substrate contacts are provided by residues aspartate 181 and 215–221 (CSAGIGR). Cysteine 215 (phosphocysteine intermediate) is an active-site residue. A Cysteine persulfide modification is found at cysteine 215. Cysteine 215 carries the post-translational modification S-nitrosocysteine; in reversibly inhibited form. Phosphoserine; by CLK1 and CLK2 occurs at positions 242 and 243. Glutamine 262 lines the substrate pocket. The disordered stretch occupies residues 297 to 322 (EDLEPPPEHVPPPPRPPKRTLEPHNG). A phosphoserine mark is found at serine 335, serine 362, and serine 364. The interval 350-402 (SRAPSIAVHSMSSMSQDTEVRKRMVGGGLQSAQASVPTEEELSPTEEEQKAHR) is disordered. Threonine 367 carries the phosphothreonine modification.

This sequence belongs to the protein-tyrosine phosphatase family. Non-receptor class 1 subfamily. Interacts with EPHA3 (phosphorylated); dephosphorylates EPHA3 and may regulate its trafficking and function. Interacts with MET. Interacts with NCK1. Post-translationally, ser-50 is the major site of phosphorylation as compared to Ser-242 and Ser-243. Activated by phosphorylation at Ser-50. S-nitrosylation of Cys-215 inactivates the enzyme activity. In terms of processing, sulfhydration at Cys-215 following endoplasmic reticulum stress inactivates the enzyme activity, promoting EIF2AK3/PERK activity. In terms of tissue distribution, found in several tissues including central nervous system, liver and kidney. A high level of expression was found in the hippocampus.

The protein localises to the endoplasmic reticulum membrane. The catalysed reaction is O-phospho-L-tyrosyl-[protein] + H2O = L-tyrosyl-[protein] + phosphate. Functionally, tyrosine-protein phosphatase which acts as a regulator of endoplasmic reticulum unfolded protein response. Mediates dephosphorylation of EIF2AK3/PERK; inactivating the protein kinase activity of EIF2AK3/PERK. May play an important role in CKII- and p60c-src-induced signal transduction cascades. May regulate the EFNA5-EPHA3 signaling pathway which modulates cell reorganization and cell-cell repulsion. May also regulate the hepatocyte growth factor receptor signaling pathway through dephosphorylation of MET. This chain is Tyrosine-protein phosphatase non-receptor type 1 (Ptpn1), found in Rattus norvegicus (Rat).